The primary structure comprises 77 residues: uncharacterized protein (77 aa).

2 disordered regions span residues 1–34 and 56–77; these read MSRAYLADNDKGWAKKKGADSHATPRPHKQTKMN and LDGDIRRGGNKKSERVSGFSGR. Residues 8–20 are compositionally biased toward basic and acidic residues; sequence DNDKGWAKKKGAD. Positions 25–34 are enriched in basic residues; it reads PRPHKQTKMN. Residues 56 to 70 show a composition bias toward basic and acidic residues; that stretch reads LDGDIRRGGNKKSER.

This is an uncharacterized protein from Dictyostelium discoideum (Social amoeba).